A 333-amino-acid chain; its full sequence is MSKLITIERHILEQQKNFPEATGELTDLLSDVAFAAKLVRREVVRAGLVDILGFAGSTNVQGEEVKKLDLFANDKIINAIGQHGRFAIMGSEENEEIITPPNNENGSYALLFDPLDGSSNIDVNVSVGTIFSIYKIKNSDPRKADISDCLQKGSEQVAAGYVIYGSSVVMVYTTGNGVHGFTYDPTIGEFLLSHENIVTPKHGKYYSINEGSYAQFNDTTKKYLDYIKEEDSATGRPYSTRYIGSLVADFHRNLLTGGVFVYPPTTNHPNGKLRLMYEGNPLAYICEQAGGRATDGRRRILDIDPSELHQRTPLYIGSEDDVRVAEEFEQGIR.

Residues Glu92, Asp113, Leu115, and Asp116 each coordinate Mg(2+). Substrate is bound by residues 116–119 (DGSS), Asn209, Tyr242, and Lys272. Residue Glu278 participates in Mg(2+) binding.

This sequence belongs to the FBPase class 1 family. As to quaternary structure, homotetramer. Mg(2+) is required as a cofactor.

It localises to the cytoplasm. It carries out the reaction beta-D-fructose 1,6-bisphosphate + H2O = beta-D-fructose 6-phosphate + phosphate. It functions in the pathway carbohydrate biosynthesis; Calvin cycle. The sequence is that of Fructose-1,6-bisphosphatase class 1 from Chlorobium phaeovibrioides (strain DSM 265 / 1930) (Prosthecochloris vibrioformis (strain DSM 265)).